A 373-amino-acid polypeptide reads, in one-letter code: Phosphoserine aminotransferase (373 aa).

Arginine 47 provides a ligand contact to L-glutamate. Residues 81 to 82 (AR), tryptophan 113, threonine 164, aspartate 185, and glutamine 208 contribute to the pyridoxal 5'-phosphate site. Lysine 209 carries the N6-(pyridoxal phosphate)lysine modification. Residue 250–251 (NT) coordinates pyridoxal 5'-phosphate.

The protein belongs to the class-V pyridoxal-phosphate-dependent aminotransferase family. SerC subfamily. Homodimer. Pyridoxal 5'-phosphate is required as a cofactor.

It is found in the cytoplasm. It catalyses the reaction O-phospho-L-serine + 2-oxoglutarate = 3-phosphooxypyruvate + L-glutamate. The enzyme catalyses 4-(phosphooxy)-L-threonine + 2-oxoglutarate = (R)-3-hydroxy-2-oxo-4-phosphooxybutanoate + L-glutamate. Its pathway is amino-acid biosynthesis; L-serine biosynthesis; L-serine from 3-phospho-D-glycerate: step 2/3. The protein operates within cofactor biosynthesis; pyridoxine 5'-phosphate biosynthesis; pyridoxine 5'-phosphate from D-erythrose 4-phosphate: step 3/5. Its function is as follows. Catalyzes the reversible conversion of 3-phosphohydroxypyruvate to phosphoserine and of 3-hydroxy-2-oxo-4-phosphonooxybutanoate to phosphohydroxythreonine. The sequence is that of Phosphoserine aminotransferase from Buchnera aphidicola subsp. Baizongia pistaciae (strain Bp).